A 121-amino-acid polypeptide reads, in one-letter code: Neuropeptide-like protein 7 (121 aa).

The first 22 residues, 1-22 (MYIKAALLIVVLFGVASQITSA), serve as a signal peptide directing secretion.

Functionally, may regulate lifespan in response to food availability and oxidative stress. In Caenorhabditis elegans, this protein is Neuropeptide-like protein 7.